A 205-amino-acid polypeptide reads, in one-letter code: Imidazole glycerol phosphate synthase subunit HisH (205 aa).

Residues 1–205 (MIALVDYGGG…FFKMALGDKK (205 aa)) enclose the Glutamine amidotransferase type-1 domain. The Nucleophile role is filled by Cys79. Residues His181 and Glu183 contribute to the active site.

In terms of assembly, heterodimer of HisH and HisF.

It is found in the cytoplasm. It carries out the reaction 5-[(5-phospho-1-deoxy-D-ribulos-1-ylimino)methylamino]-1-(5-phospho-beta-D-ribosyl)imidazole-4-carboxamide + L-glutamine = D-erythro-1-(imidazol-4-yl)glycerol 3-phosphate + 5-amino-1-(5-phospho-beta-D-ribosyl)imidazole-4-carboxamide + L-glutamate + H(+). It catalyses the reaction L-glutamine + H2O = L-glutamate + NH4(+). The protein operates within amino-acid biosynthesis; L-histidine biosynthesis; L-histidine from 5-phospho-alpha-D-ribose 1-diphosphate: step 5/9. Its function is as follows. IGPS catalyzes the conversion of PRFAR and glutamine to IGP, AICAR and glutamate. The HisH subunit catalyzes the hydrolysis of glutamine to glutamate and ammonia as part of the synthesis of IGP and AICAR. The resulting ammonia molecule is channeled to the active site of HisF. This is Imidazole glycerol phosphate synthase subunit HisH from Dehalococcoides mccartyi (strain CBDB1).